Consider the following 342-residue polypeptide: MKALAKLERGPGLTLTRVKRPEVGHNDVLIKIRRTAICGTDIHIWKWDDWAQKTIPVPMHVGHEYVGEIVEMGQEVRGFAIGDRVSGEGHITCGFCRNCRAGRRHLCRNTVGVGVNREGAFAEYLAIPAFNAFKIPPEISDDLASIFDPFGNATHTALSFNLVGEDVLITGAGPIGIMAVAIAKHVGARNVVITDINDYRLELARKMGATRAVNVARESLRDVMADLHMTEGFDVGLEMSGVPSAFTSLLEAMNHGGKVALLGIPPAQTAIDWNQVIFKGLEIKGIYGREMFETWYKMVAMLQSGLDLSPIITHRFAADDYEQGFAAMLSGESGKVILDWTV.

Cys38 contributes to the Zn(2+) binding site. Catalysis depends on charge relay system residues Thr40 and His43. Positions 63, 64, 93, 96, 99, and 107 each coordinate Zn(2+). NAD(+)-binding positions include Ile175, Asp195, Arg200, 262–264 (LGI), and 286–287 (IY).

It belongs to the zinc-containing alcohol dehydrogenase family. As to quaternary structure, homotetramer. It depends on Zn(2+) as a cofactor.

It is found in the cytoplasm. The enzyme catalyses L-threonine + NAD(+) = (2S)-2-amino-3-oxobutanoate + NADH + H(+). It participates in amino-acid degradation; L-threonine degradation via oxydo-reductase pathway; glycine from L-threonine: step 1/2. Its function is as follows. Catalyzes the NAD(+)-dependent oxidation of L-threonine to 2-amino-3-ketobutyrate. The sequence is that of L-threonine 3-dehydrogenase from Burkholderia cenocepacia (strain ATCC BAA-245 / DSM 16553 / LMG 16656 / NCTC 13227 / J2315 / CF5610) (Burkholderia cepacia (strain J2315)).